Consider the following 346-residue polypeptide: S-adenosylmethionine:tRNA ribosyltransferase-isomerase (346 aa).

The protein belongs to the QueA family. Monomer.

The protein resides in the cytoplasm. It carries out the reaction 7-aminomethyl-7-carbaguanosine(34) in tRNA + S-adenosyl-L-methionine = epoxyqueuosine(34) in tRNA + adenine + L-methionine + 2 H(+). It functions in the pathway tRNA modification; tRNA-queuosine biosynthesis. Its function is as follows. Transfers and isomerizes the ribose moiety from AdoMet to the 7-aminomethyl group of 7-deazaguanine (preQ1-tRNA) to give epoxyqueuosine (oQ-tRNA). The protein is S-adenosylmethionine:tRNA ribosyltransferase-isomerase of Shewanella denitrificans (strain OS217 / ATCC BAA-1090 / DSM 15013).